The chain runs to 206 residues: Pyrrolidone-carboxylate peptidase (206 aa).

Active-site residues include glutamate 78, cysteine 141, and histidine 165.

Belongs to the peptidase C15 family. Homotetramer.

It localises to the cytoplasm. The catalysed reaction is Release of an N-terminal pyroglutamyl group from a polypeptide, the second amino acid generally not being Pro.. Its function is as follows. Removes 5-oxoproline from various penultimate amino acid residues except L-proline. The sequence is that of Pyrrolidone-carboxylate peptidase from Thermococcus kodakarensis (strain ATCC BAA-918 / JCM 12380 / KOD1) (Pyrococcus kodakaraensis (strain KOD1)).